A 55-amino-acid polypeptide reads, in one-letter code: Small integral membrane protein 27 (55 aa).

The helical transmembrane segment at 11-31 (WIYSVLLLAIVLISWGCIIYA) threads the bilayer.

The protein localises to the membrane. In Homo sapiens (Human), this protein is Small integral membrane protein 27.